The following is a 601-amino-acid chain: MEGSDFLLAGVLFLFAAVAAVPLASRLGIGAVLGYLLAGIAIGPWGLGFISDVDEILHFSELGVVFLMFIIGLELNPSKLWQLRRSIFGVGAAQVLLSAALLAGLLMLTHFSWQAAVVGGIGLAMSSTAMALQLMRDKRMNRSESGQLGFSVLLFQDLAVIPALALVPLLAGSADEHFDWMKIGMKVLAFVGMLIGGRYLLRPVFRFIAASGVREVFTAATLLLVLGSALFMDALGLSMALGTFIAGVLLAESEYRHELETAIDPFKGLLLGLFFISVGMSLNLGVLYTHLLWVVISVVVLVAVKILVLYLLARLYGVRSSERMQFAGVLSQGGEFAFVLFSTASSQRLFQGDQMALLLVTVTLSMMTTPLLMKLVDKWLSRQFNGPEEEDEKPWVNDDKPQVIVVGFGRFGQVIGRLLMANKMRITVLERDISAVNLMRKYGYKVYYGDATQVDLLRSAGAEAAESIVITCNEPEDTMKLVEICQQHFPHLHILARARGRVEAHELLQAGVTQFSRETFSSALELGRKTLVTLGMHPHQAQRAQLHFRRLDMRMLRELIPMHADTVQISRAREARRELEEIFQREMQQERRQLDGWDEFE.

Transmembrane regions (helical) follow at residues 4–24, 29–49, 55–75, 87–107, 115–135, 152–172, 177–197, 207–227, 230–250, 268–288, 291–311, 324–344, and 356–376; these read SDFL…VPLA, IGAV…GLGF, EILH…GLEL, IFGV…GLLM, AAVV…LQLM, VLLF…LLAG, HFDW…LIGG, FIAA…LVLG, LFMD…GVLL, GLLL…GVLY, LLWV…VLYL, MQFA…FSTA, and ALLL…MKLV. Positions 400 to 519 constitute an RCK N-terminal domain; that stretch reads KPQVIVVGFG…AGVTQFSRET (120 aa).

This sequence belongs to the monovalent cation:proton antiporter 2 (CPA2) transporter (TC 2.A.37) family. KefB subfamily. In terms of assembly, interacts with the regulatory subunit KefG.

Its subcellular location is the cell inner membrane. In terms of biological role, pore-forming subunit of a potassium efflux system that confers protection against electrophiles. Catalyzes K(+)/H(+) antiport. The protein is Glutathione-regulated potassium-efflux system protein KefB of Escherichia coli (strain SMS-3-5 / SECEC).